Here is a 261-residue protein sequence, read N- to C-terminus: Hemin import ATP-binding protein HmuV (261 aa).

One can recognise an ABC transporter domain in the interval 5 to 241; the sequence is LTANAASFAI…DLLARVFDVD (237 aa). 37-44 is an ATP binding site; sequence GPNGAGKS.

The protein belongs to the ABC transporter superfamily. Heme (hemin) importer (TC 3.A.1.14.5) family. As to quaternary structure, the complex is composed of two ATP-binding proteins (HmuV), two transmembrane proteins (HmuU) and a solute-binding protein (HmuT).

The protein resides in the cell inner membrane. Part of the ABC transporter complex HmuTUV involved in hemin import. Responsible for energy coupling to the transport system. This chain is Hemin import ATP-binding protein HmuV, found in Rhodopseudomonas palustris (strain BisB5).